Consider the following 241-residue polypeptide: Endodeoxyribonuclease NucC (241 aa).

Residues D73, E104, and K106 contribute to the active site. D73 and E104 together coordinate Mg(2+).

It belongs to the NucC endonuclease family. In terms of assembly, self-oligomerizes. Forms homotrimers; in the presence of cAAA the trimers associate face-to-face to form homohexamers. The 2 cAAA-binding sites are on the exterior of the hexamer at the three-way junction, there are maximally 2 cyclic nucleotides per hexamer. Mg(2+) is required as a cofactor.

Activated by cAAA and to a lesser extent cAA; both cyclic nucleotides are products of its cognate CD-NTase. Cyclic nucleotide binding causes hexamerization. Functionally, effector DNase of a CBASS antivirus system. CBASS (cyclic oligonucleotide-based antiphage signaling system) provides immunity against bacteriophage. The CD-NTase protein synthesizes cyclic nucleotides in response to infection; these serve as specific second messenger signals. The signals activate a diverse range of effectors, leading to bacterial cell death and thus abortive phage infection. A type III-C(AAA) CBASS system. In terms of biological role, a cyclic nucleotide-activated dsDNase. In the presence of 3',3',3'-cyclic AMP-AMP-AMP (cAAA) and to a lesser extent cyclic-di-AMP (c-di-AMP), endonucleolytically degrades dsDNA. Binds one cAAA in a pocket on one surface of the trimer; cAAA binding promotes hexamerization which is probably necessary for nuclease activation. The nuclease digests dsDNA to about 50 bp lengths. DNA has been modeled to contact a pair of juxtaposed active sites (one from each layer of the hexamer), accounting for cleavage on both strands. The sequence is that of Endodeoxyribonuclease NucC from Pseudomonas aeruginosa.